The chain runs to 601 residues: MSTISIHHVGILRNPLHSKSKRASINKPWSLSLPRSSSASRLVEPCRVSSKTDTKPAEITRRSGNYEPSLWDFDFIQSLDNHHPYVKEKQLKREEELIVQVKMLLGTKMEAVKQLELIDDLKNLGLSYFFRDEIKTILTSIYNNSFENKNNQVGDLYFTSLGFRLLRQHGFNVSQDIFDCFKNEKGSDFDETLIGEDTKATLQLYEVSFHLREGENTLELARQISTKYLQKQVNEGRISDENLSLWIRHSLDLPLHWRIQRLEARWFLDAYAAREDKNPLIFKLAKLDFNIIQATQQEELKEVSRWWNDSCLAEKLPFVRDRVVESYFWGVGLFEGHEFGYQRKLTAAYILLISAIDDVYDVYGTLDELRLFTDVFRRWDTESIDQLPYYMQLCYLALHNYVSGVAYDILKDHRRNTIPYLQETWVELVEAYMKEAEWYQSGYTPSLEEYLTIAKISIGSLPILLSVELSLPDSTIDRATFDRRHKMFYLSATVSRLADDLGTAPSELERGDVPKAIQCYMKDTNASEEEAQGHVRFMIREAWKELNTAMAEPDDCPFTEQVVEATANIGRAAQYIYREGDGHGHFQIRQHVRNLFFHPYV.

A chloroplast-targeting transit peptide spans Met1–Arg47. The Mn(2+) site is built by Asp357 and Asp361. The short motif at Asp357–Asp361 is the DDXXD motif element. 2 homodimerization regions span residues Tyr363–Leu369 and Glu435–Leu471. 2 residues coordinate Mn(2+): Asp499 and Glu507.

This sequence belongs to the terpene synthase family. Homodimer. Requires Mn(2+) as cofactor. Mg(2+) serves as cofactor.

Its subcellular location is the plastid. It localises to the chloroplast. The enzyme catalyses (2E)-geranyl diphosphate + H2O = (S)-alpha-terpineol + diphosphate. The catalysed reaction is (2E)-geranyl diphosphate + H2O = (R)-alpha-terpineol + diphosphate. It functions in the pathway secondary metabolite biosynthesis; terpenoid biosynthesis. In terms of biological role, involved in the biosynthesis of phenolic monoterpenes natural products. Monoterpene synthase which catalyzes the conversion of geranyl diphosphate (GPP) to alpha-terpineol (isomer is not determined). In Thymus caespititius (Cretan thyme), this protein is Alpha-terpineol synthase, chloroplastic.